The primary structure comprises 114 residues: Large ribosomal subunit protein uL22 (114 aa).

The protein belongs to the universal ribosomal protein uL22 family. Part of the 50S ribosomal subunit.

This protein binds specifically to 23S rRNA; its binding is stimulated by other ribosomal proteins, e.g. L4, L17, and L20. It is important during the early stages of 50S assembly. It makes multiple contacts with different domains of the 23S rRNA in the assembled 50S subunit and ribosome. In terms of biological role, the globular domain of the protein is located near the polypeptide exit tunnel on the outside of the subunit, while an extended beta-hairpin is found that lines the wall of the exit tunnel in the center of the 70S ribosome. This is Large ribosomal subunit protein uL22 from Lysinibacillus sphaericus (strain C3-41).